Here is a 122-residue protein sequence, read N- to C-terminus: Large ribosomal subunit protein uL14 (122 aa).

This sequence belongs to the universal ribosomal protein uL14 family. In terms of assembly, part of the 50S ribosomal subunit. Forms a cluster with proteins L3 and L19. In the 70S ribosome, L14 and L19 interact and together make contacts with the 16S rRNA in bridges B5 and B8.

Binds to 23S rRNA. Forms part of two intersubunit bridges in the 70S ribosome. The chain is Large ribosomal subunit protein uL14 from Streptomyces griseus subsp. griseus (strain JCM 4626 / CBS 651.72 / NBRC 13350 / KCC S-0626 / ISP 5235).